We begin with the raw amino-acid sequence, 264 residues long: Proteasome assembly chaperone 2 (264 aa).

Position 137 is a phosphothreonine (Thr-137).

The protein belongs to the PSMG2 family. Forms a heterodimer with PSMG1. The PSMG1-PSMG2 heterodimer interacts directly with the PSMA5 and PSMA7 proteasome alpha subunits. In terms of processing, degraded by the proteasome upon completion of 20S proteasome maturation. As to expression, widely expressed with highest levels in lung, brain and colon. Moderately expressed in muscle, stomach, spleen and heart. Weakly expressed in small intestine, pancreas and liver. Highly expressed in hepatocellular carcinomas with low levels in surrounding liver tissue.

Its subcellular location is the nucleus. Its function is as follows. Chaperone protein which promotes assembly of the 20S proteasome as part of a heterodimer with PSMG1. The PSMG1-PSMG2 heterodimer binds to the PSMA5 and PSMA7 proteasome subunits, promotes assembly of the proteasome alpha subunits into the heteroheptameric alpha ring and prevents alpha ring dimerization. The sequence is that of Proteasome assembly chaperone 2 from Homo sapiens (Human).